The chain runs to 254 residues: Probable transcriptional regulatory protein Saro_0419 (254 aa).

The segment covering 1–14 has biased composition (basic residues); sequence MAGHSKFKNIMHRK. Positions 1–22 are disordered; the sequence is MAGHSKFKNIMHRKGAQDKKRS.

The protein belongs to the TACO1 family.

It localises to the cytoplasm. In Novosphingobium aromaticivorans (strain ATCC 700278 / DSM 12444 / CCUG 56034 / CIP 105152 / NBRC 16084 / F199), this protein is Probable transcriptional regulatory protein Saro_0419.